A 44-amino-acid chain; its full sequence is Cuticle protein CP466 (44 aa).

2 tandem repeats follow at residues 3 to 20 (LLEG…KKYL) and 27 to 44 (VLLT…NVQF).

In terms of tissue distribution, calcified shell.

In Cancer pagurus (Rock crab), this protein is Cuticle protein CP466.